A 466-amino-acid polypeptide reads, in one-letter code: ATP synthase subunit beta (466 aa).

Residue 156–163 (GGAGVGKT) coordinates ATP.

The protein belongs to the ATPase alpha/beta chains family. F-type ATPases have 2 components, CF(1) - the catalytic core - and CF(0) - the membrane proton channel. CF(1) has five subunits: alpha(3), beta(3), gamma(1), delta(1), epsilon(1). CF(0) has three main subunits: a(1), b(2) and c(9-12). The alpha and beta chains form an alternating ring which encloses part of the gamma chain. CF(1) is attached to CF(0) by a central stalk formed by the gamma and epsilon chains, while a peripheral stalk is formed by the delta and b chains.

It is found in the cell inner membrane. The catalysed reaction is ATP + H2O + 4 H(+)(in) = ADP + phosphate + 5 H(+)(out). Functionally, produces ATP from ADP in the presence of a proton gradient across the membrane. The catalytic sites are hosted primarily by the beta subunits. The protein is ATP synthase subunit beta of Polynucleobacter necessarius subsp. necessarius (strain STIR1).